Reading from the N-terminus, the 492-residue chain is Solute carrier family 2, facilitated glucose transporter member 1 (492 aa).

Position 1 is an N-acetylmethionine (methionine 1). Residues methionine 1–arginine 11 are Cytoplasmic-facing. Residues leucine 12–isoleucine 33 traverse the membrane as a helical segment. Over asparagine 34–serine 66 the chain is Extracellular. The N-linked (GlcNAc...) asparagine glycan is linked to asparagine 45. The helical transmembrane segment at leucine 67–valine 87 threads the bilayer. The Cytoplasmic segment spans residues asparagine 88–phenylalanine 90. A helical transmembrane segment spans residues glycine 91–phenylalanine 112. The Extracellular segment spans residues serine 113–glutamate 120. Residues methionine 121–valine 144 form a helical membrane-spanning segment. At glycine 145–alanine 155 the chain is on the cytoplasmic side. A helical transmembrane segment spans residues leucine 156 to leucine 176. Glutamine 161 lines the D-glucose pocket. The Extracellular segment spans residues aspartate 177–leucine 185. The chain crosses the membrane as a helical span at residues tryptophan 186–leucine 206. Residues cysteine 207 to proline 271 lie on the Cytoplasmic side of the membrane. Serine 226 is modified (phosphoserine). Residues isoleucine 272 to tyrosine 293 traverse the membrane as a helical segment. D-glucose contacts are provided by residues glutamine 282–glutamine 283 and asparagine 288. Residues serine 294–proline 306 are Extracellular-facing. Residues valine 307 to valine 328 form a helical membrane-spanning segment. Residue asparagine 317 coordinates D-glucose. The Cytoplasmic portion of the chain corresponds to glutamate 329–arginine 334. The chain crosses the membrane as a helical span at residues threonine 335–leucine 355. The Extracellular portion of the chain corresponds to alanine 356–serine 365. A helical membrane pass occupies residues tyrosine 366–tryptophan 388. Positions 380 and 388 each coordinate D-glucose. The Cytoplasmic segment spans residues phenylalanine 389–proline 401. The helical transmembrane segment at alanine 402 to phenylalanine 422 threads the bilayer. Residues glutamine 423–cysteine 429 lie on the Extracellular side of the membrane. Residues glycine 430–phenylalanine 450 form a helical membrane-spanning segment. Residues lysine 451–valine 492 lie on the Cytoplasmic side of the membrane. Serine 465 carries the phosphoserine modification. Positions arginine 468–valine 492 are disordered. Threonine 478 bears the Phosphothreonine mark. At serine 490 the chain carries Phosphoserine.

This sequence belongs to the major facilitator superfamily. Sugar transporter (TC 2.A.1.1) family. Glucose transporter subfamily. As to quaternary structure, found in a complex with ADD2, DMTN and SLC2A1. Interacts (via C-terminus cytoplasmic region) with DMTN. Interacts with SNX27; the interaction is required when endocytosed to prevent degradation in lysosomes and promote recycling to the plasma membrane. Interacts with GIPC (via PDZ domain). Interacts with STOM. Interacts with SGTA (via Gln-rich region). Interacts with BSG. Interacts with SMIM43; the interaction may promote SLC2A1-mediated glucose transport to meet the energy needs of mesendoderm differentiation. Post-translationally, phosphorylation at Ser-226 by PKC promotes glucose uptake by increasing cell membrane localization.

It is found in the cell membrane. It localises to the photoreceptor inner segment. It catalyses the reaction D-glucose(out) = D-glucose(in). The uptake of glucose is inhibited by cytochalasin B. Glucose uptake is increased in response to phorbol ester 12-O-tetradecanoylphorbol-13-acetate (TPA) treatment: TPA-induced glucose uptake requires phosphorylation at Ser-226. Facilitative glucose transporter, which is responsible for constitutive or basal glucose uptake. Has a very broad substrate specificity; can transport a wide range of aldoses including both pentoses and hexoses. Most important energy carrier of the brain: present at the blood-brain barrier and assures the energy-independent, facilitative transport of glucose into the brain. In association with BSG and NXNL1, promotes retinal cone survival by increasing glucose uptake into photoreceptors. Required for mesendoderm differentiation. This is Solute carrier family 2, facilitated glucose transporter member 1 from Oryctolagus cuniculus (Rabbit).